The following is a 220-amino-acid chain: ATP phosphoribosyltransferase (220 aa).

Belongs to the ATP phosphoribosyltransferase family. Short subfamily. Heteromultimer composed of HisG and HisZ subunits.

The protein localises to the cytoplasm. The catalysed reaction is 1-(5-phospho-beta-D-ribosyl)-ATP + diphosphate = 5-phospho-alpha-D-ribose 1-diphosphate + ATP. The protein operates within amino-acid biosynthesis; L-histidine biosynthesis; L-histidine from 5-phospho-alpha-D-ribose 1-diphosphate: step 1/9. In terms of biological role, catalyzes the condensation of ATP and 5-phosphoribose 1-diphosphate to form N'-(5'-phosphoribosyl)-ATP (PR-ATP). Has a crucial role in the pathway because the rate of histidine biosynthesis seems to be controlled primarily by regulation of HisG enzymatic activity. The sequence is that of ATP phosphoribosyltransferase from Janthinobacterium sp. (strain Marseille) (Minibacterium massiliensis).